The chain runs to 295 residues: Excinuclease cho (295 aa).

In terms of domain architecture, GIY-YIG spans 33-108 (TRPGVYLFHG…IKEQQPLFNK (76 aa)).

Functionally, incises the DNA at the 3' side of a lesion during nucleotide excision repair. Incises the DNA farther away from the lesion than UvrC. Not able to incise the 5' site of a lesion. In vitro, the incision activity of Cho is UvrA and UvrB dependent. When a lesion remains because UvrC is not able to induce the 3' incision, Cho incises the DNA. Then UvrC makes the 5' incision. The combined action of Cho and UvrC broadens the substrate range of nucleotide excision repair. This chain is Excinuclease cho (cho), found in Escherichia coli (strain K12).